A 301-amino-acid polypeptide reads, in one-letter code: Peptidyl-prolyl isomerase CWC27 (301 aa).

The region spanning 9–159 is the PPIase cyclophilin-type domain; that stretch reads TTAKCILYTT…YPAVLKDVEI (151 aa). Residues 251 to 280 are disordered; sequence TELHDNVDEATTKETESQENIKEEPMDKRE.

The protein belongs to the cyclophilin-type PPIase family. CWC27 subfamily. Belongs to the CWC complex (or CEF1-associated complex), a spliceosome subcomplex composed of the U2, U5 and U6 snRNAs and at least BUD13, BUD31, BRR2, CDC40, CEF1, CLF1, CUS1, CWC2, CWC15, CWC21, CWC22, CWC23, CWC24, CWC25, CWC27, ECM2, HSH155, IST3, ISY1, LEA1, MSL1, NTC20, PRP8, PRP9, PRP11, PRP19, PRP21, PRP22, PRP45, PRP46, SLU7, SMB1, SMD1, SMD2, SMD3, SMX2, SMX3, SNT309, SNU114, SPP2, SYF1, SYF2, RSE1 and YJU2.

It localises to the cytoplasm. Its subcellular location is the nucleus. It catalyses the reaction [protein]-peptidylproline (omega=180) = [protein]-peptidylproline (omega=0). Its function is as follows. PPIases accelerate the folding of proteins. Catalyzes the cis-trans isomerization of proline imidic peptide bonds in oligopeptides. Involved in pre-mRNA splicing. This Saccharomyces cerevisiae (strain ATCC 204508 / S288c) (Baker's yeast) protein is Peptidyl-prolyl isomerase CWC27 (CWC27).